A 347-amino-acid chain; its full sequence is NAD-dependent alcohol dehydrogenase (347 aa).

Lys-11 is modified (N6-methyllysine). Cys-38, His-68, Glu-98, Cys-101, Cys-104, Cys-112, and Cys-154 together coordinate Zn(2+). Residue Lys-213 is modified to N6-methyllysine.

This sequence belongs to the zinc-containing alcohol dehydrogenase family. Homodimer and homotetramer. It depends on Zn(2+) as a cofactor.

It carries out the reaction a primary alcohol + NAD(+) = an aldehyde + NADH + H(+). The catalysed reaction is a secondary alcohol + NAD(+) = a ketone + NADH + H(+). The sequence is that of NAD-dependent alcohol dehydrogenase (adh) from Sulfurisphaera tokodaii (strain DSM 16993 / JCM 10545 / NBRC 100140 / 7) (Sulfolobus tokodaii).